The sequence spans 573 residues: Membrane protein insertase YidC (573 aa).

Residues 6–26 (VFLIFAWLMVAALLWMEWGKD) form a helical membrane-spanning segment. The tract at residues 63-82 (PQAGSPAAVPATSTTTATPA) is disordered. 5 helical membrane-spanning segments follow: residues 355–375 (FSIMAIIGQGLFWVLSHLHSF), 379–399 (WGWAIIGLVVLLRLALYPLSA), 446–466 (GGCLPLLIQMPIFFALYWVLV), 488–508 (PYFILPVLNIAIMWATQKLTP), and 524–544 (PLVFGVMMAFMPAGLVLYWVV).

This sequence belongs to the OXA1/ALB3/YidC family. Type 1 subfamily. In terms of assembly, interacts with the Sec translocase complex via SecD. Specifically interacts with transmembrane segments of nascent integral membrane proteins during membrane integration.

It is found in the cell inner membrane. Functionally, required for the insertion and/or proper folding and/or complex formation of integral membrane proteins into the membrane. Involved in integration of membrane proteins that insert both dependently and independently of the Sec translocase complex, as well as at least some lipoproteins. Aids folding of multispanning membrane proteins. This is Membrane protein insertase YidC from Xanthomonas campestris pv. campestris (strain 8004).